Here is a 433-residue protein sequence, read N- to C-terminus: Homogentisate 1,2-dioxygenase (433 aa).

Histidine 288 acts as the Proton acceptor in catalysis. Histidine 331 and glutamate 337 together coordinate Fe cation. Positions 346 and 367 each coordinate homogentisate. Fe cation is bound at residue histidine 367.

It belongs to the homogentisate dioxygenase family. Hexamer; dimer of trimers. It depends on Fe cation as a cofactor.

It carries out the reaction homogentisate + O2 = 4-maleylacetoacetate + H(+). It functions in the pathway amino-acid degradation; L-phenylalanine degradation; acetoacetate and fumarate from L-phenylalanine: step 4/6. Its function is as follows. Involved in the catabolism of homogentisate (2,5-dihydroxyphenylacetate or 2,5-OH-PhAc), a central intermediate in the degradation of phenylalanine and tyrosine. Catalyzes the oxidative ring cleavage of the ar omatic ring of 2,5-dihydroxyphenylacetate to yield maleylacetoacetate. In Pseudomonas putida (strain ATCC 47054 / DSM 6125 / CFBP 8728 / NCIMB 11950 / KT2440), this protein is Homogentisate 1,2-dioxygenase.